A 210-amino-acid polypeptide reads, in one-letter code: TBC1 domain family member 28 (210 aa).

The region spanning 101–210 (VIPLAVRGRA…WVSLGGVATS (110 aa)) is the Rab-GAP TBC domain.

This is TBC1 domain family member 28 (TBC1D28) from Homo sapiens (Human).